The sequence spans 205 residues: MKNYHDIVLALAGVCQSAKLVHQLATESRADSDTFLTALNSLFITQPQRIEDVFGGEVRHLKLGLETLIHQLNAQGDQNLTRYWLSLLALEGKLSKNPDAKQTLGNRISRLKEQEIHYARDSETMLSIMANIYSDIISPLGKKIHILGSPDYLRQELVQNKIRAVLLAGIRSAVLWKQMGGTKWQILFFRRKLLATAKQIYSSIY.

This sequence belongs to the HflD family.

Its subcellular location is the cytoplasm. It is found in the cell inner membrane. In Haemophilus influenzae (strain PittEE), this protein is High frequency lysogenization protein HflD homolog.